The primary structure comprises 181 residues: Endoribonuclease YbeY (181 aa).

Zn(2+) contacts are provided by histidine 115, histidine 119, and histidine 125.

This sequence belongs to the endoribonuclease YbeY family. Zn(2+) is required as a cofactor.

The protein resides in the cytoplasm. Functionally, single strand-specific metallo-endoribonuclease involved in late-stage 70S ribosome quality control and in maturation of the 3' terminus of the 16S rRNA. The polypeptide is Endoribonuclease YbeY (Bifidobacterium adolescentis (strain ATCC 15703 / DSM 20083 / NCTC 11814 / E194a)).